Here is a 527-residue protein sequence, read N- to C-terminus: Bifunctional pantoate ligase/cytidylate kinase (527 aa).

The interval 1-277 (MRQLISPEAL…VGTARLIDNL (277 aa)) is pantoate--beta-alanine ligase. 27 to 34 (MGALHAGH) is an ATP binding site. The active-site Proton donor is the histidine 34. Glutamine 58 is a (R)-pantoate binding site. Position 58 (glutamine 58) interacts with beta-alanine. Position 147-150 (147-150 (GEKD)) interacts with ATP. Residue glutamine 153 coordinates (R)-pantoate. ATP contacts are provided by residues valine 176 and 184–187 (LSSR). The interval 278–527 (TLQGRRPIIA…GQTPSPLSLG (250 aa)) is cytidylate kinase. A disordered region spans residues 507-527 (GLGDSSPQATPGQTPSPLSLG). Polar residues predominate over residues 511 to 527 (SSPQATPGQTPSPLSLG).

It in the N-terminal section; belongs to the pantothenate synthetase family. In the C-terminal section; belongs to the cytidylate kinase family. Type 1 subfamily.

The protein resides in the cytoplasm. It carries out the reaction (R)-pantoate + beta-alanine + ATP = (R)-pantothenate + AMP + diphosphate + H(+). It catalyses the reaction CMP + ATP = CDP + ADP. The catalysed reaction is dCMP + ATP = dCDP + ADP. The protein operates within cofactor biosynthesis; (R)-pantothenate biosynthesis; (R)-pantothenate from (R)-pantoate and beta-alanine: step 1/1. Catalyzes the condensation of pantoate with beta-alanine in an ATP-dependent reaction via a pantoyl-adenylate intermediate. Its function is as follows. Catalyzes the transfer of a phosphate group from ATP to either CMP or dCMP to form CDP or dCDP and ADP, respectively. This Synechococcus elongatus (strain ATCC 33912 / PCC 7942 / FACHB-805) (Anacystis nidulans R2) protein is Bifunctional pantoate ligase/cytidylate kinase.